A 458-amino-acid polypeptide reads, in one-letter code: Phosphoglucosamine mutase (458 aa).

Serine 106 serves as the catalytic Phosphoserine intermediate. Mg(2+) contacts are provided by serine 106, aspartate 247, aspartate 249, and aspartate 251. Serine 106 carries the phosphoserine modification.

This sequence belongs to the phosphohexose mutase family. The cofactor is Mg(2+). Post-translationally, activated by phosphorylation.

The enzyme catalyses alpha-D-glucosamine 1-phosphate = D-glucosamine 6-phosphate. In terms of biological role, catalyzes the conversion of glucosamine-6-phosphate to glucosamine-1-phosphate. The protein is Phosphoglucosamine mutase of Chlamydia trachomatis serovar L2 (strain ATCC VR-902B / DSM 19102 / 434/Bu).